The chain runs to 58 residues: Large ribosomal subunit protein bL32c (58 aa).

The protein belongs to the bacterial ribosomal protein bL32 family.

It is found in the plastid. The protein localises to the chloroplast. The sequence is that of Large ribosomal subunit protein bL32c from Chaetosphaeridium globosum (Charophycean green alga).